The sequence spans 87 residues: DNA-directed RNA polymerase subunit Rpo5 (87 aa).

This sequence belongs to the archaeal Rpo5/eukaryotic RPB5 RNA polymerase subunit family. Part of the RNA polymerase complex.

The protein localises to the cytoplasm. The enzyme catalyses RNA(n) + a ribonucleoside 5'-triphosphate = RNA(n+1) + diphosphate. DNA-dependent RNA polymerase (RNAP) catalyzes the transcription of DNA into RNA using the four ribonucleoside triphosphates as substrates. The chain is DNA-directed RNA polymerase subunit Rpo5 from Thermoplasma volcanium (strain ATCC 51530 / DSM 4299 / JCM 9571 / NBRC 15438 / GSS1).